Reading from the N-terminus, the 528-residue chain is Aurora kinase (528 aa).

Disordered stretches follow at residues 1-35 and 48-235; these read MMLPRNSPHRTESTLAYNNNNSNNNNNNNGSSLFQ and ISKP…KPQQ. Composition is skewed to low complexity over residues 18–29 and 59–94; these read NNNNSNNNNNNN and HSHTFTTPTPKTRNTATTTTNNNNRNNHQYRNPNLN. Polar residues predominate over residues 95–104; that stretch reads TSLVFTPTKN. The span at 105-120 shows a compositional bias: low complexity; that stretch reads SSSSSSSHSSSLLSSS. Positions 129 to 155 are enriched in polar residues; sequence QPESNHTRATSHYRTTSTSQYKSSANK. Residues 185–230 show a composition bias toward low complexity; that stretch reads TTTATQNTNNNKILNPSLSSSTIRFSTVSSSTSSSTTSSSSSSHTS. The region spanning 242–515 is the Protein kinase domain; the sequence is FEFGKILGKG…LKEVLNHNWI (274 aa). ATP is bound by residues 248–256 and Lys271; that span reads LGKGKLGRV. The active-site Proton acceptor is the Asp365.

It belongs to the protein kinase superfamily. Ser/Thr protein kinase family. Aurora subfamily.

Its subcellular location is the nucleus. It is found in the cytoplasm. The protein localises to the cytoskeleton. It localises to the spindle. The protein resides in the chromosome. Its subcellular location is the centromere. It is found in the kinetochore. It catalyses the reaction L-seryl-[protein] + ATP = O-phospho-L-seryl-[protein] + ADP + H(+). It carries out the reaction L-threonyl-[protein] + ATP = O-phospho-L-threonyl-[protein] + ADP + H(+). Its function is as follows. Component of the chromosomal passenger complex (CPC), a complex that acts as a key regulator of chromosome segregation and cytokinesis. Has a role in error-correction of aberrent kinetochore-microtubule attachments to ensure that sister kinetochores become bioriented and connect to opposite poles by promoting spindle assembly checkpoint signaling. This chain is Aurora kinase (IPL1), found in Candida albicans (strain SC5314 / ATCC MYA-2876) (Yeast).